The primary structure comprises 839 residues: MDFVVDYQTYAMADTATPELPEPEPRLNLTSDAQSQPTGKLDLQFKLPDLQRYSNNNATLPVDNDGAGSKDLHKKMTHYAMSSIDKIQLSNPSKQLGQNSQDEKLSQQESQNFTNYEPKNLDLSKLVSPSSGSNKNTTNLVLSNKLSKILNNYTLINYQATVQLRKSLKVLEENKERLSLDEQKLMNPEYVGTLARRALRTDLESQLLKEHITVLEEFKPIIRRIKRLSSSVEKIQRTSEKLLSNETNEVPTNNVVLQEIDQYRLKAEQLKLKKKILLSIRDRFTLNQVEDDVITNGTIDNIFFEVVKKVINIKDESSFLLTLPNLNAGNALIMGVNEILEKTNKKIFNYLIDFLYSFESSSNLLNDHGTTEQESLNIFRKSLVFLSSDLELFNELLKRVTTLRSKSILDEFLSQFDMNSTTSKPIILSAHDPIRYIGDVLASVHSIIANEADFVKSLFDFQDEDLKDTPISILQQNKTFLKGIDNKLLNDIIQSLSNSCRIRIEQIVRFEENPIINFEIVRLLKLYRVMFERKGIQDDSSIINNLKSLEDISKNRIIGYYEDYMKQTVMAETKNSSDDLLPPEWLSEYMNKLVELFEIYEKTHAAEDEESEDNKLLSSKNLQTIVEQPIKDVLLKQLQTSFPLAKKNEKEKASLLTIEINCFDLIKSRLQPFEGLFAQDDDSRKITIWVCDKLKEYTKQMLTLQIKFLFENTGLDLYSNLVNMIFPVDSVKDELDYDMYLALRDNSLMELDMVRKNVHDKLNYYLPQALTDVQGNLLFKLTSPMIADEICDECFKKLSLFYNIFRKLLIHLYPNKKDQVFEILNFSTDEFDMLIGIDH.

Residues 14–38 (DTATPELPEPEPRLNLTSDAQSQPT) are disordered.

This sequence belongs to the COG6 family. Component of the conserved oligomeric Golgi (COG or Sec34/Sec35) complex which consists of eight different proteins COG1-COG8.

It localises to the golgi apparatus membrane. In terms of biological role, acts as a component of the peripheral membrane COG complex that is involved in intra-Golgi protein trafficking. COG is located at the cis-Golgi, and regulates tethering of retrograde intra-Golgi vesicles and possibly a number of other membrane trafficking events. The sequence is that of Conserved oligomeric Golgi complex subunit 6 (COG6) from Saccharomyces cerevisiae (strain ATCC 204508 / S288c) (Baker's yeast).